A 213-amino-acid polypeptide reads, in one-letter code: LexA repressor 2 (213 aa).

The segment at residues 27–47 (QTEIARAFGFKGVRAAQYHLE) is a DNA-binding region (H-T-H motif). Catalysis depends on for autocatalytic cleavage activity residues Ser133 and Lys170.

The protein belongs to the peptidase S24 family. In terms of assembly, homodimer.

It catalyses the reaction Hydrolysis of Ala-|-Gly bond in repressor LexA.. Its function is as follows. Represses a number of genes involved in the response to DNA damage (SOS response), including recA and lexA. In the presence of single-stranded DNA, RecA interacts with LexA causing an autocatalytic cleavage which disrupts the DNA-binding part of LexA, leading to derepression of the SOS regulon and eventually DNA repair. This Xanthomonas campestris pv. campestris (strain ATCC 33913 / DSM 3586 / NCPPB 528 / LMG 568 / P 25) protein is LexA repressor 2.